Consider the following 290-residue polypeptide: Sodium/potassium-transporting ATPase subunit beta-2 (290 aa).

The Cytoplasmic segment spans residues 1-39 (MVIQKEKKSCGQVVEEWKEFVWNPRTHQFMGRTGTSWAF). Residues 40-67 (ILLFYLVFYGFLTAMFTLTMWVMLQTVS) traverse the membrane as a helical; Signal-anchor for type II membrane protein segment. The Extracellular portion of the chain corresponds to 68–290 (EHTPKYQDRL…VAFKLRINKT (223 aa)). Asn96 and Asn118 each carry an N-linked (GlcNAc...) asparagine glycan. Cys129 and Cys150 are oxidised to a cystine. Asn153 and Asn159 each carry an N-linked (GlcNAc...) asparagine glycan. A disulfide bridge connects residues Cys160 and Cys177. Asn193, Asn197, and Asn238 each carry an N-linked (GlcNAc...) asparagine glycan. Positions 193 to 290 (NQSMNVTCAG…VAFKLRINKT (98 aa)) are immunoglobulin-like. Cysteines 200 and 261 form a disulfide.

It belongs to the X(+)/potassium ATPases subunit beta family. The sodium/potassium-transporting ATPase is composed of a catalytic alpha subunit, an auxiliary non-catalytic beta subunit and an additional regulatory subunit. Interacts with BSG.

Its subcellular location is the cell membrane. Its function is as follows. This is the non-catalytic component of the active enzyme, which catalyzes the hydrolysis of ATP coupled with the exchange of Na(+) and K(+) ions across the plasma membrane. The exact function of the beta-2 subunit is not known. Mediates cell adhesion of neurons and astrocytes, and promotes neurite outgrowth. The sequence is that of Sodium/potassium-transporting ATPase subunit beta-2 (ATP1B2) from Oryctolagus cuniculus (Rabbit).